Here is a 278-residue protein sequence, read N- to C-terminus: Tryptophan synthase alpha chain (278 aa).

Catalysis depends on proton acceptor residues E50 and D61.

The protein belongs to the TrpA family. Tetramer of two alpha and two beta chains.

It catalyses the reaction (1S,2R)-1-C-(indol-3-yl)glycerol 3-phosphate + L-serine = D-glyceraldehyde 3-phosphate + L-tryptophan + H2O. It functions in the pathway amino-acid biosynthesis; L-tryptophan biosynthesis; L-tryptophan from chorismate: step 5/5. Its function is as follows. The alpha subunit is responsible for the aldol cleavage of indoleglycerol phosphate to indole and glyceraldehyde 3-phosphate. The chain is Tryptophan synthase alpha chain from Nitrobacter hamburgensis (strain DSM 10229 / NCIMB 13809 / X14).